The chain runs to 74 residues: Small ribosomal subunit protein bS18 (74 aa).

Belongs to the bacterial ribosomal protein bS18 family. As to quaternary structure, part of the 30S ribosomal subunit. Forms a tight heterodimer with protein bS6.

Binds as a heterodimer with protein bS6 to the central domain of the 16S rRNA, where it helps stabilize the platform of the 30S subunit. The sequence is that of Small ribosomal subunit protein bS18 from Coprothermobacter proteolyticus (strain ATCC 35245 / DSM 5265 / OCM 4 / BT).